The primary structure comprises 135 residues: Snaclec rhodocetin subunit gamma (135 aa).

Intrachain disulfides connect cysteine 4/cysteine 15, cysteine 32/cysteine 129, and cysteine 104/cysteine 121. Positions 11–130 constitute a C-type lectin domain; that stretch reads YDQHCYQAFN…CQAKNPFVCK (120 aa).

Belongs to the snaclec family. Heterotetramer of subunit alpha, beta, gamma and delta; only the gamma and the delta subunits are disulfide-linked. Alpha-beta heterodimer and gamma-delta heterodimer associate orthogonally, giving a cruciform conformation. This heterotetramer may covalently dimerizes thanks to the gamma subunit. Expressed by the venom gland.

The protein resides in the secreted. Its function is as follows. Potent inhibitor of collagen-induced platelet aggregation. It acts by binding to the integrin alpha2A domain and blocks collagen binding to integrin alpha-2/beta-1 (ITGA2/ITGB1). The gamma/delta subunits mainly contribute to this activity. This is Snaclec rhodocetin subunit gamma from Calloselasma rhodostoma (Malayan pit viper).